Here is a 508-residue protein sequence, read N- to C-terminus: Maturase K (508 aa).

The protein belongs to the intron maturase 2 family. MatK subfamily.

The protein localises to the plastid. It localises to the chloroplast. Its function is as follows. Usually encoded in the trnK tRNA gene intron. Probably assists in splicing its own and other chloroplast group II introns. The sequence is that of Maturase K from Manilkara zapota (Sapodilla plum).